Reading from the N-terminus, the 174-residue chain is Gamma-crystallin C (174 aa).

2 consecutive Beta/gamma crystallin 'Greek key' domains span residues 2–40 (GKIT…RVDS) and 41–83 (GCWM…CLIS). Residue C23 is modified to S-methylcysteine. The connecting peptide stretch occupies residues 84 to 87 (DTSS). 2 consecutive Beta/gamma crystallin 'Greek key' domains span residues 88–128 (HRLR…HVLE) and 129–171 (GCWV…RRVV).

It belongs to the beta/gamma-crystallin family.

Its function is as follows. Crystallins are the dominant structural components of the vertebrate eye lens. The polypeptide is Gamma-crystallin C (CRYGC) (Bos taurus (Bovine)).